The primary structure comprises 500 residues: Probable malate:quinone oxidoreductase (500 aa).

This sequence belongs to the MQO family. The cofactor is FAD.

The enzyme catalyses (S)-malate + a quinone = a quinol + oxaloacetate. The protein operates within carbohydrate metabolism; tricarboxylic acid cycle; oxaloacetate from (S)-malate (quinone route): step 1/1. This Bacillus cereus (strain ZK / E33L) protein is Probable malate:quinone oxidoreductase.